The chain runs to 349 residues: Probable L-asparaginase periplasmic (349 aa).

The signal sequence occupies residues 1 to 21 (MKLTKLALCTLFGLGVSIANA). Residues 25 to 349 (PNITILATGG…KVIQQYFEDF (325 aa)) enclose the Asparaginase/glutaminase domain. Thr35 (O-isoaspartyl threonine intermediate) is an active-site residue. Residues Ser81 and 112–113 (TD) each bind substrate. Cys100 and Cys128 are oxidised to a cystine.

This sequence belongs to the asparaginase 1 family.

It is found in the periplasm. The catalysed reaction is L-asparagine + H2O = L-aspartate + NH4(+). The polypeptide is Probable L-asparaginase periplasmic (ansB) (Haemophilus influenzae (strain ATCC 51907 / DSM 11121 / KW20 / Rd)).